The following is a 315-amino-acid chain: tRNA pseudouridine synthase B (315 aa).

D47 serves as the catalytic Nucleophile.

Belongs to the pseudouridine synthase TruB family. Type 1 subfamily.

The enzyme catalyses uridine(55) in tRNA = pseudouridine(55) in tRNA. In terms of biological role, responsible for synthesis of pseudouridine from uracil-55 in the psi GC loop of transfer RNAs. The protein is tRNA pseudouridine synthase B of Shewanella pealeana (strain ATCC 700345 / ANG-SQ1).